A 419-amino-acid polypeptide reads, in one-letter code: Serine hydroxymethyltransferase (419 aa).

Residues Leu-121 and 125-127 each bind (6S)-5,6,7,8-tetrahydrofolate; that span reads GHL. The residue at position 230 (Lys-230) is an N6-(pyridoxal phosphate)lysine.

The protein belongs to the SHMT family. Homodimer. Pyridoxal 5'-phosphate serves as cofactor.

It is found in the cytoplasm. The enzyme catalyses (6R)-5,10-methylene-5,6,7,8-tetrahydrofolate + glycine + H2O = (6S)-5,6,7,8-tetrahydrofolate + L-serine. It participates in one-carbon metabolism; tetrahydrofolate interconversion. The protein operates within amino-acid biosynthesis; glycine biosynthesis; glycine from L-serine: step 1/1. Its function is as follows. Catalyzes the reversible interconversion of serine and glycine with tetrahydrofolate (THF) serving as the one-carbon carrier. This reaction serves as the major source of one-carbon groups required for the biosynthesis of purines, thymidylate, methionine, and other important biomolecules. Also exhibits THF-independent aldolase activity toward beta-hydroxyamino acids, producing glycine and aldehydes, via a retro-aldol mechanism. The chain is Serine hydroxymethyltransferase from Vesicomyosocius okutanii subsp. Calyptogena okutanii (strain HA).